A 624-amino-acid polypeptide reads, in one-letter code: MSMKGQETRGFQSEVKQLLHLMIHSLYSNKEIFLRELISNASDAADKLRFRALSHPELFEGDGELRVRLSFDKEKRTLTLSDNGIGMSREEVIDNLGTIAKSGTKAFLESIGSDQAKDSQLIGQFGVGFYSAFIVADKVTVRTRAAGAPADAGVFWESAGEGDYTIADITKEDRGTEITLHLREGEDEYLDNWRLRSVISKYSDHIALPVEIESKNEEDGTVTWEKINKAQALWTRGKAEITDDEYKAFYKHIAHDFTDPLIWSHNRVEGKQEYTSLLYIPAQAPWDMWNRDHKHGLKLYVQRVFIMDDAEQFMPNYLRFVRGLIDSNDLPLNVSREILQDSRVTQNLRSALTKRVLQMLEKLAKDDAEKYQQFWQQFGMALKEGPAEDGSNKDTIAKLLRFASTHTDSSAQTVSLEDYVSRMAEGQEKIYYITADSYAAAKNSPHLELFRKKGIEVLLLSDRIDEWMMSYLTEFDGKAFQSVSKADDSLNKLADEERPEQQEADKALEPFVERVKTLLGERVKDVRLTHRLTDTPAIVTTDADEMSTQMAKLFAAAGQQAPEVKYIFELNPEHSLVKRAADVADDTQFAEWVELLLDQALLAERGTLEDPNQFIRRMNQLLTA.

The interval 1–336 (MSMKGQETRG…SNDLPLNVSR (336 aa)) is a; substrate-binding. Positions 337–552 (EILQDSRVTQ…ADEMSTQMAK (216 aa)) are b. The c stretch occupies residues 553–624 (LFAAAGQQAP…IRRMNQLLTA (72 aa)).

It belongs to the heat shock protein 90 family. In terms of assembly, homodimer.

The protein localises to the cytoplasm. In terms of biological role, molecular chaperone. Has ATPase activity. The chain is Chaperone protein HtpG from Yersinia enterocolitica serotype O:8 / biotype 1B (strain NCTC 13174 / 8081).